The following is a 126-amino-acid chain: uncharacterized protein (126 aa).

2 stretches are compositionally biased toward basic residues: residues 21 to 31 (RKKRKKRKKRR) and 41 to 83 (RILK…RKRR). The disordered stretch occupies residues 21 to 83 (RKKRKKRKKR…RSPRKRRKRR (63 aa)).

This is an uncharacterized protein from Saccharomyces cerevisiae (strain ATCC 204508 / S288c) (Baker's yeast).